We begin with the raw amino-acid sequence, 202 residues long: Histone chaperone ASF1B (202 aa).

The tract at residues 1-155 (MAKVSVLNVA…VTRFHINWDN (155 aa)) is interaction with CHAF1B. The interval 1–156 (MAKVSVLNVA…TRFHINWDNN (156 aa)) is interaction with histone H3. The residue at position 198 (Ser-198) is a Phosphoserine; by TLK2.

The protein belongs to the ASF1 family. Interacts with histone H3 (via C-terminus), including histone H3.1, H3.2 and H3.3, and histone H4; the interaction with H3 is direct. Interacts with the CHAF1A, CHAF1B and RBBP4 subunits of the CAF-1 complex. Interacts with HAT1, NASP and TAF1. Found in a soluble complex with NASP and histones H3 and H4; the interaction with NASP is probably indirect and mediated by H3-H4. Interacts with CDAN1. Found in a cytosolic complex with IPO4 and histones H3 and H4. Interacts with CREBBP. Phosphorylated by TLK1 and TLK2. As to expression, highly expressed in testis and at lower levels in colon, small intestine and thymus.

Its subcellular location is the nucleus. It is found in the cytoplasm. The protein resides in the cytosol. Histone chaperone that facilitates histone deposition and histone exchange and removal during nucleosome assembly and disassembly. Cooperates with chromatin assembly factor 1 (CAF-1) to promote replication-dependent chromatin assembly. Also involved in the nuclear import of the histone H3-H4 dimer together with importin-4 (IPO4): specifically recognizes and binds newly synthesized histones with the monomethylation of H3 'Lys-9' (H3K9me1) and diacetylation at 'Lys-5' and 'Lys-12' of H4 (H4K5K12ac) marks in the cytosol. Does not participate in replication-independent nucleosome deposition which is mediated by ASF1A and HIRA. Required for gonad development. This chain is Histone chaperone ASF1B, found in Homo sapiens (Human).